The following is a 756-amino-acid chain: Phosphoinositide 3-kinase regulatory subunit 6 (756 aa).

Disordered regions lie at residues 570–589 (SKSPKEGSSPRRRGAAEGTG) and 716–738 (CSRTQKSKTSALNSHGQETEKNM). The span at 717-731 (SRTQKSKTSALNSHG) shows a compositional bias: polar residues.

Heterodimer of a catalytic subunit (PIK3CG) and a regulatory (PIK3R6) subunit. The binding of PIK3R6 to PIK3CG may exclude the binding of PIK3R5 to PIK3CG. Interacts with beta-gamma G protein dimers. Interacts with PDE3B and RAPGEF3; form a signaling complex that regulates phosphatidylinositol 3-kinase gamma in angiogenesis. As to expression, highly expressed in heart. In a lower extent, also expressed in brain, spleen, lung, liver, kidney, prostate, thyroid, salivary gland, dendritic cells, macrophages and neutrophils.

It is found in the cytoplasm. The protein resides in the cell membrane. Its function is as follows. Regulatory subunit of the PI3K gamma complex. Acts as an adapter to drive activation of PIK3CG by beta-gamma G protein dimers. The PIK3CG:PIK3R6 heterodimer is much less sensitive to beta-gamma G proteins than PIK3CG:PIK3R5 and its membrane recruitment and beta-gamma G protein dimer-dependent activation requires HRAS bound to PIK3CG. Recruits of the PI3K gamma complex to a PDE3B:RAPGEF3 signaling complex involved in angiogenesis; signaling seems to involve RRAS. This chain is Phosphoinositide 3-kinase regulatory subunit 6 (Pik3r6), found in Mus musculus (Mouse).